The sequence spans 137 residues: Oleosin Ara h 11.0101 (137 aa).

At Ala-2 the chain carries N-acetylalanine; alternate. A run of 2 helical transmembrane segments spans residues 27-47 (AVVA…GTVI) and 55-75 (LFVI…LLGL).

Belongs to the oleosin family. In terms of tissue distribution, expressed in seeds (at protein level).

It localises to the lipid droplet. Its subcellular location is the membrane. Its function is as follows. May have a structural role to stabilize the lipid body during desiccation of the seed by preventing coalescence of the oil. Probably interacts with both lipid and phospholipid moieties of lipid bodies. May also provide recognition signals for specific lipase anchorage in lipolysis during seedling growth. This chain is Oleosin Ara h 11.0101, found in Arachis hypogaea (Peanut).